The chain runs to 312 residues: Porphobilinogen deaminase (312 aa).

At cysteine 241 the chain carries S-(dipyrrolylmethanemethyl)cysteine.

This sequence belongs to the HMBS family. In terms of assembly, monomer. Dipyrromethane is required as a cofactor.

It catalyses the reaction 4 porphobilinogen + H2O = hydroxymethylbilane + 4 NH4(+). The protein operates within porphyrin-containing compound metabolism; protoporphyrin-IX biosynthesis; coproporphyrinogen-III from 5-aminolevulinate: step 2/4. It functions in the pathway porphyrin-containing compound metabolism; chlorophyll biosynthesis. Tetrapolymerization of the monopyrrole PBG into the hydroxymethylbilane pre-uroporphyrinogen in several discrete steps. This chain is Porphobilinogen deaminase, found in Prosthecochloris aestuarii (strain DSM 271 / SK 413).